The primary structure comprises 268 residues: AN1-type zinc finger protein 1 (268 aa).

Residue Ala2 is modified to N-acetylalanine. AN1-type zinc fingers lie at residues 4–52 (LDIG…VVKE) and 58–106 (EHKS…VAKP). Zn(2+) contacts are provided by Cys10, Cys15, Cys25, Cys28, Cys33, His36, His42, Cys44, Cys64, Cys69, Cys79, Cys82, Cys87, His90, His96, and Cys98. The segment at 160–260 (QTERTYFQVY…EYLNDEEQFL (101 aa)) is ubiquitin-like.

In terms of assembly, associates with the 26S proteasome; this association occurs upon exposure to arsenite and is reduced in the presence of ATP. Interacts (via AN1-type 1 and 2 zinc fingers) with PSMD1; this interaction is increased upon arsenite treatment and occurs in an ATP-independent manner. Interacts with PSMC4. Interacts with PSMA1. Interacts (via its ubiquitin-like region) with VCP; this interaction occurs in an arsenite-dependent manner and is necessary for the recruitment of the ubiquitin-selective ATPase VCP to stress granules (SGs).

It is found in the cytoplasm. The protein localises to the stress granule. In terms of biological role, plays a role in the regulation of cytoplasmic stress granules (SGs) turnover. SGs are dynamic and transient cytoplasmic ribonucleoprotein assemblies important for cellular protein homeostasis when protein production is suspended after acute exogenous stress. Associates with SGs and is involved in the efficient and specific arsenite-induced clearance process of SGs through the recruitment of the ubiquitin-selective ATPase VCP and the 26S proteasome. This process requires both complexes for efficient degradation of damaged ubiquitinated SG proteins during recovery from arsenite stress, and hence avoiding aberrant cytoplasmic SGs degradation via autophagy. This is AN1-type zinc finger protein 1 from Mus musculus (Mouse).